A 275-amino-acid chain; its full sequence is Trypsin-4 (275 aa).

An N-terminal signal peptide occupies residues Met-1–Cys-18. Positions Ala-19–Arg-48 are cleaved as a propeptide — activation peptide. A Peptidase S1 domain is found at Ile-49 to Gly-274. A disulfide bond links Cys-74 and Cys-90. Residues His-89 and Asp-134 each act as charge relay system in the active site. 2 cysteine pairs are disulfide-bonded: Cys-199–Cys-215 and Cys-226–Cys-250. The active-site Charge relay system is Ser-230.

The protein belongs to the peptidase S1 family. Expressed in the midgut. Expression levels drop a few hours after blood feeding and pick up again 28 hours later.

Its subcellular location is the secreted. The catalysed reaction is Preferential cleavage: Arg-|-Xaa, Lys-|-Xaa.. Functionally, constitutive trypsin that is expressed 2 days after emergence, coinciding with host seeking behavior of the female. This chain is Trypsin-4 (TRYP4), found in Anopheles gambiae (African malaria mosquito).